The chain runs to 447 residues: Beclin-1 (447 aa).

Positions 44-53 (PPLTAAPARP) are enriched in low complexity. The segment at 44–71 (PPLTAAPARPGDAQEESALSEEAFTEGR) is disordered. The short motif at 105 to 124 (TMENLSRRLKVTGDLFDIMS) is the BH3 element. Residues 139–266 (DTLLDQLDTQ…QLDKLKKTNV (128 aa)) adopt a coiled-coil conformation. The evolutionary conserved domain (ECD) stretch occupies residues 242-447 (DELKSVENQM…AWVSSQFYNK (206 aa)). Positions 422-447 (WTKALKFMLTNLKWGLAWVSSQFYNK) are required for membrane-association.

The protein belongs to the beclin family. In terms of assembly, component of the PI3K (PI3KC3/PI3K-III/class III phosphatidylinositol 3-kinase) complex. Post-translationally, may be proteolytically processed by caspases; the C-terminal fragment(s) may induce apoptosis.

The protein resides in the cytoplasm. Its subcellular location is the golgi apparatus. It is found in the trans-Golgi network membrane. It localises to the endosome membrane. The protein localises to the endoplasmic reticulum membrane. The protein resides in the mitochondrion membrane. Its subcellular location is the cytoplasmic vesicle. It is found in the autophagosome. Plays a central role in autophagy. Acts as core subunit of different PI3K complex forms that mediate formation of phosphatidylinositol 3-phosphate and are believed to play a role in multiple membrane trafficking pathways such as initiation of autophagosomes, maturation of autophagosomes and endocytosis. Involved in regulation of degradative endocytic trafficking and required for the abscission step in cytokinesis, probably in the context of PI3KC3-C2. This Gallus gallus (Chicken) protein is Beclin-1 (BECN1).